The chain runs to 434 residues: Serine hydroxymethyltransferase (434 aa).

(6S)-5,6,7,8-tetrahydrofolate-binding positions include Leu-128 and 132–134; that span reads GHL. Lys-237 bears the N6-(pyridoxal phosphate)lysine mark.

The protein belongs to the SHMT family. Homodimer. The cofactor is pyridoxal 5'-phosphate.

Its subcellular location is the cytoplasm. It carries out the reaction (6R)-5,10-methylene-5,6,7,8-tetrahydrofolate + glycine + H2O = (6S)-5,6,7,8-tetrahydrofolate + L-serine. Its pathway is one-carbon metabolism; tetrahydrofolate interconversion. The protein operates within amino-acid biosynthesis; glycine biosynthesis; glycine from L-serine: step 1/1. Its function is as follows. Catalyzes the reversible interconversion of serine and glycine with tetrahydrofolate (THF) serving as the one-carbon carrier. This reaction serves as the major source of one-carbon groups required for the biosynthesis of purines, thymidylate, methionine, and other important biomolecules. Also exhibits THF-independent aldolase activity toward beta-hydroxyamino acids, producing glycine and aldehydes, via a retro-aldol mechanism. The chain is Serine hydroxymethyltransferase from Corynebacterium glutamicum (strain R).